The chain runs to 247 residues: UPF0280 protein MmarC5_0355 (247 aa).

This sequence belongs to the UPF0280 family.

The polypeptide is UPF0280 protein MmarC5_0355 (Methanococcus maripaludis (strain C5 / ATCC BAA-1333)).